Here is a 132-residue protein sequence, read N- to C-terminus: Small ribosomal subunit protein uS8 (132 aa).

The protein belongs to the universal ribosomal protein uS8 family. As to quaternary structure, part of the 30S ribosomal subunit. Contacts proteins S5 and S12.

In terms of biological role, one of the primary rRNA binding proteins, it binds directly to 16S rRNA central domain where it helps coordinate assembly of the platform of the 30S subunit. In Brucella ovis (strain ATCC 25840 / 63/290 / NCTC 10512), this protein is Small ribosomal subunit protein uS8.